Consider the following 101-residue polypeptide: Small ribosomal subunit protein uS14 (101 aa).

Residues 49-70 (QSLPRDSSPSRQRNRCNQTGRP) are disordered. The segment covering 52 to 68 (PRDSSPSRQRNRCNQTG) has biased composition (polar residues).

It belongs to the universal ribosomal protein uS14 family. In terms of assembly, part of the 30S ribosomal subunit. Contacts proteins S3 and S10.

Its function is as follows. Binds 16S rRNA, required for the assembly of 30S particles and may also be responsible for determining the conformation of the 16S rRNA at the A site. The protein is Small ribosomal subunit protein uS14 of Yersinia pseudotuberculosis serotype O:1b (strain IP 31758).